We begin with the raw amino-acid sequence, 62 residues long: Large ribosomal subunit protein uL30 (62 aa).

It belongs to the universal ribosomal protein uL30 family. In terms of assembly, part of the 50S ribosomal subunit.

The polypeptide is Large ribosomal subunit protein uL30 (Pseudoalteromonas atlantica (strain T6c / ATCC BAA-1087)).